The primary structure comprises 101 residues: Small ribosomal subunit protein uS10 (101 aa).

The protein belongs to the universal ribosomal protein uS10 family. As to quaternary structure, part of the 30S ribosomal subunit.

Functionally, involved in the binding of tRNA to the ribosomes. The protein is Small ribosomal subunit protein uS10 of Methanocaldococcus jannaschii (strain ATCC 43067 / DSM 2661 / JAL-1 / JCM 10045 / NBRC 100440) (Methanococcus jannaschii).